The sequence spans 569 residues: MISKLKPQFMFLPKKHILSYCRKDVLNLFEQKFYYTSKRKESNNMKNESLLRLINYNRYYNKIDSNNYYNGGKILSNDRQYIYSPLCEYKKKINDISSYVSVPFKINIRNLGTSNFVNNKKDVLDNDYIYENIKKEKSKHKKIIFLLFVSLFGLYGFFESYNPEFFLYDIFLKFCLKYIDGEICHDLFLLLGKYNILPYDTSNDSIYACTNIKHLDFINPFGVAAGFDKNGVCIDSILKLGFSFIEIGTITPRGQTGNAKPRIFRDVESRSIINSCGFNNMGCDKVTENLILFRKRQEEDKLLSKHIVGVSIGKNKDTVNIVDDLKYCINKIGRYADYIAINVSSPNTPGLRDNQEAGKLKNIILSVKEEIDNLEKNNIMNDESTYNEDNKIVEKKNNFNKNNSHMMKDAKDNFLWFNTTKKKPLVFVKLAPDLNQEQKKEIADVLLETNIDGMIISNTTTQINDIKSFENKKGGVSGAKLKDISTKFICEMYNYTNKQIPIIASGGIFSGLDALEKIEAGASVCQLYSCLVFNGMKSAVQIKRELNHLLYQRGYYNLKEAIGRKHSKS.

The N-terminal 23 residues, 1–23 (MISKLKPQFMFLPKKHILSYCRK), are a transit peptide targeting the mitochondrion. A helical transmembrane segment spans residues 143–163 (IIFLLFVSLFGLYGFFESYNP). FMN is bound by residues 225 to 229 (AGFDK) and threonine 249. Lysine 229 contacts substrate. Substrate contacts are provided by residues 274–278 (NSCGF) and asparagine 342. Residue asparagine 342 participates in FMN binding. Serine 345 (nucleophile) is an active-site residue. Asparagine 347 contacts substrate. Lysine 429 contributes to the FMN binding site. A substrate-binding site is contributed by 458 to 459 (NT). FMN contacts are provided by residues 477–478 (SG), 505–507 (SGG), and 528–529 (YS).

The protein belongs to the dihydroorotate dehydrogenase family. Type 2 subfamily. Monomer. The cofactor is FMN.

The protein resides in the mitochondrion inner membrane. It catalyses the reaction (S)-dihydroorotate + a quinone = orotate + a quinol. Its pathway is pyrimidine metabolism; UMP biosynthesis via de novo pathway; orotate from (S)-dihydroorotate (quinone route): step 1/1. In terms of biological role, catalyzes the conversion of dihydroorotate to orotate with quinone as electron acceptor. This Plasmodium falciparum (isolate 3D7) protein is Dihydroorotate dehydrogenase (quinone), mitochondrial.